A 323-amino-acid polypeptide reads, in one-letter code: Porphobilinogen deaminase (323 aa).

Residue cysteine 240 is modified to S-(dipyrrolylmethanemethyl)cysteine.

It belongs to the HMBS family. In terms of assembly, monomer. Dipyrromethane is required as a cofactor.

The catalysed reaction is 4 porphobilinogen + H2O = hydroxymethylbilane + 4 NH4(+). The protein operates within porphyrin-containing compound metabolism; protoporphyrin-IX biosynthesis; coproporphyrinogen-III from 5-aminolevulinate: step 2/4. Its function is as follows. Tetrapolymerization of the monopyrrole PBG into the hydroxymethylbilane pre-uroporphyrinogen in several discrete steps. The chain is Porphobilinogen deaminase from Sulfurovum sp. (strain NBC37-1).